The chain runs to 5005 residues: Bridge-like lipid transfer protein family member 1 (5005 aa).

Residues 27-47 traverse the membrane as a helical segment; it reads VVWLLVATILSCGWIIYLTYY. 2 disordered regions span residues 692-718 and 1205-1314; these read RPAQ…PSEL and KSVG…ASVC. A compositionally biased stretch (pro residues) spans 708–718; that stretch reads SPRPPVDPSEL. Residues 1205 to 1215 show a composition bias toward basic and acidic residues; it reads KSVGIEGERKT. Over residues 1226-1240 the composition is skewed to low complexity; sequence SHSSSSSSEENSSSS. Residues 1248–1275 show a composition bias toward basic and acidic residues; it reads GEKESPSSAADDHSVQKDLLHSARRDDG. Over residues 1278–1303 the composition is skewed to polar residues; the sequence is SVPTEISGTSPVSPNTQDKSVGQSPL. A phosphoserine mark is found at Ser-1301, Ser-1305, and Ser-1323. Thr-1325 is subject to Phosphothreonine. Disordered stretches follow at residues 1343-1376, 1399-1425, 1521-1544, and 1676-1698; these read SDVS…SNSF, EEFE…QMQQ, TNKR…SEES, and FSEN…MIGT. A phosphoserine mark is found at Ser-1355 and Ser-1406. Basic residues predominate over residues 1521-1530; that stretch reads TNKRTSKSSL. The span at 1684 to 1693 shows a compositional bias: basic and acidic residues; the sequence is QDIRGTKTEH. A phosphoserine mark is found at Ser-1805 and Ser-1808. Disordered regions lie at residues 1927 to 1991, 2165 to 2192, 2265 to 2288, 2367 to 2387, 2400 to 2420, and 2598 to 2677; these read RGGV…PLMP, PAQP…GGLQ, TSGD…KESP, ESPV…PNLP, SSDQ…QDDV, and TAGS…KDVV. Composition is skewed to polar residues over residues 1931-1948 and 1959-1971; these read LTSN…YNTD and TSPS…NSVS. Polar residues-rich tracts occupy residues 2367 to 2379, 2400 to 2418, and 2598 to 2608; these read ESPV…NSLP, SSDQ…TSQD, and TAGSASPTPTF. Ser-2601 and Ser-2603 each carry phosphoserine. Residues 2619-2638 show a composition bias toward low complexity; the sequence is SDFSRSSRGSLNGGNRVNNA. Positions 2643-2665 are enriched in basic and acidic residues; it reads ANNENNKKESRNKNSLGRSERRT. Ser-2755 carries the post-translational modification Phosphoserine. Residues 2928–2967 are disordered; the sequence is RQPSTAPQPMKEDIATPLPSEKTPTSVNQTPIETNEFPQL. The span at 2949–2964 shows a compositional bias: polar residues; that stretch reads KTPTSVNQTPIETNEF. 3 positions are modified to phosphoserine: Ser-3562, Glu-3577, and Ser-3653. Disordered stretches follow at residues 3614-3662, 3686-3744, 3821-3843, 3935-3954, 4089-4145, and 4325-4396; these read YSRS…TFNI, SSNS…ERFY, RRSY…KKFQ, KTNT…KGKG, TTYP…SSSS, and QSAS…ASQQ. Positions 3686–3711 are enriched in polar residues; it reads SSNSEGSCSVFSSPKTTGGFSPSVPF. The segment covering 3727 to 3736 has biased composition (acidic residues); sequence EDSEKDEKDE. Basic and acidic residues predominate over residues 3821–3837; it reads RRSYDRSSRSLDQDSPS. The span at 4097–4112 shows a compositional bias: polar residues; sequence SPGSNAPQTGAKTSAS. Residues 4117–4145 show a composition bias toward low complexity; it reads PGSSGLGSPLGRSRHSSSQSDLTGSSSSS. Phosphoserine is present on Ser-4124. Polar residues predominate over residues 4325 to 4358; it reads QSASFTHMPQSPNVFNEHMTNNTMSPGTAAQSLK. The span at 4359–4372 shows a compositional bias: low complexity; sequence SPASIRSRSVSDSS. The segment covering 4381–4396 has biased composition (polar residues); the sequence is KTSTPVNKSNKAASQQ.

Highly expressed in testis and ovary. Weakly or not expressed in other tissues.

Its subcellular location is the cell membrane. It is found in the endoplasmic reticulum membrane. The protein resides in the mitochondrion membrane. In terms of biological role, tube-forming lipid transport protein which provides phosphatidylethanolamine for glycosylphosphatidylinositol (GPI) anchor synthesis in the endoplasmic reticulum. Plays a role in endosomal trafficking and endosome recycling. Also involved in the actin cytoskeleton and cilia structural dynamics. Acts as a regulator of phagocytosis. In Mus musculus (Mouse), this protein is Bridge-like lipid transfer protein family member 1 (Bltp1).